The sequence spans 211 residues: Endo-1,4-beta-xylanase 4 (211 aa).

An N-terminal signal peptide occupies residues 1 to 16; the sequence is MKVTAAFAGLLVTAFA. In terms of domain architecture, GH11 spans 19-210; it reads VPEPVLVSRS…GACSASVTIS (192 aa). The N-linked (GlcNAc...) asparagine glycan is linked to N101. The active-site Nucleophile is the E106. Residue E197 is the Proton donor of the active site.

The protein belongs to the glycosyl hydrolase 11 (cellulase G) family.

The protein resides in the secreted. The enzyme catalyses Endohydrolysis of (1-&gt;4)-beta-D-xylosidic linkages in xylans.. It participates in glycan degradation; xylan degradation. Its function is as follows. Endo-1,4-beta-xylanase involved in the hydrolysis of xylan, a major structural heterogeneous polysaccharide found in plant biomass representing the second most abundant polysaccharide in the biosphere, after cellulose. The sequence is that of Endo-1,4-beta-xylanase 4 (XYN4) from Aspergillus niger.